The following is a 242-amino-acid chain: Uridylate kinase (242 aa).

16–19 lines the ATP pocket; that stretch reads KVSG. Gly-58 contacts UMP. Gly-59 and Arg-63 together coordinate ATP. Residues Asp-78 and 139-146 each bind UMP; that span reads TGNPFCTT. ATP contacts are provided by Thr-166, Gln-167, Tyr-172, and Asp-175.

This sequence belongs to the UMP kinase family. In terms of assembly, homohexamer.

Its subcellular location is the cytoplasm. It catalyses the reaction UMP + ATP = UDP + ADP. It functions in the pathway pyrimidine metabolism; CTP biosynthesis via de novo pathway; UDP from UMP (UMPK route): step 1/1. Its activity is regulated as follows. Inhibited by UTP. Its function is as follows. Catalyzes the reversible phosphorylation of UMP to UDP. The chain is Uridylate kinase from Rickettsia canadensis (strain McKiel).